A 369-amino-acid chain; its full sequence is Serine/threonine-protein phosphatase PP2A-1 catalytic subunit (369 aa).

The disordered stretch occupies residues 1–57 (MDTDLDVPMQDAVTEQLTPTVSEDMDLNNNSSDNNAEEFSVDDLKPGSSGIADHKSS). Positions 117, 119, 145, and 177 each coordinate Mn(2+). His178 functions as the Proton donor in the catalytic mechanism. Mn(2+)-binding residues include His227 and His301. Residues 348-369 (QYDPSVRPGEPSVSRKTPDYFL) form a disordered region. The residue at position 369 (Leu369) is a Leucine methyl ester.

Belongs to the PPP phosphatase family. PP-2A subfamily. Inactivated in a complex with phosphatase methylesterase PPE1 (PP2Ai). Interacts with phosphatase 2A activator RRD2, which can reactivate PP2Ai by dissociating the catalytic subunit from the complex. Forms a ternary complex with RRD2-TAP42. Mn(2+) serves as cofactor. Post-translationally, reversibly methyl esterified on Leu-369 by leucine carboxyl methyltransferase 1 (PPM1) and protein phosphatase methylesterase 1 (PPE1). Carboxyl methylation influences the affinity of the catalytic subunit for the different regulatory subunits, thereby modulating the PP2A holoenzyme's substrate specificity, enzyme activity and cellular localization.

The enzyme catalyses O-phospho-L-seryl-[protein] + H2O = L-seryl-[protein] + phosphate. The catalysed reaction is O-phospho-L-threonyl-[protein] + H2O = L-threonyl-[protein] + phosphate. In terms of biological role, exact function not known, phosphatase 2A performs an essential cellular function. This Saccharomyces cerevisiae (strain ATCC 204508 / S288c) (Baker's yeast) protein is Serine/threonine-protein phosphatase PP2A-1 catalytic subunit (PPH21).